The chain runs to 306 residues: Polyisoprenyl-teichoic acid--peptidoglycan teichoic acid transferase TagU (306 aa).

Residues 1-11 (MRAEKRKKKKK) are Cytoplasmic-facing. Residues 12-32 (ILYTIIALIGIFVLSTGSYAY) form a helical; Signal-anchor for type II membrane protein membrane-spanning segment. Residues 33-306 (YLWHKAASTV…TAELKESLNK (274 aa)) are Extracellular-facing.

It belongs to the LytR/CpsA/Psr (LCP) family.

Its subcellular location is the cell membrane. The protein operates within cell wall biogenesis. Functionally, may catalyze the final step in cell wall teichoic acid biosynthesis, the transfer of the anionic cell wall polymers (APs) from their lipid-linked precursor to the cell wall peptidoglycan (PG). In Bacillus licheniformis (strain ATCC 14580 / DSM 13 / JCM 2505 / CCUG 7422 / NBRC 12200 / NCIMB 9375 / NCTC 10341 / NRRL NRS-1264 / Gibson 46), this protein is Polyisoprenyl-teichoic acid--peptidoglycan teichoic acid transferase TagU.